We begin with the raw amino-acid sequence, 154 residues long: Decarboxylase claH (154 aa).

The protein belongs to the tpcK family.

It catalyses the reaction atrochrysone carboxylate + H(+) = atrochrysone + CO2. It participates in pigment biosynthesis. Functionally, decarboxylase involved in the biosynthesis of the bianthraquinone cladofulvin, a conidial pigment not required for virulence but that plays a role in fitness and resistance to environmental stresses including UV light and low-temperature stress. The pathway begins with the synthesis of atrochrysone thioester by the polyketide synthase (PKS) claG. The atrochrysone carboxyl ACP thioesterase claF then breaks the thioester bond and releases the atrochrysone carboxylic acid from claG. This compound is decarboxylated by claH to yield emodin, which is further converted to chrysophanol hydroquinone by the reductase claC and the dehydratase claB. The cytochrome monooxygenase P450 claM then catalyzes the dimerization of nataloe-emodin to cladofulvin. This chain is Decarboxylase claH, found in Passalora fulva (Tomato leaf mold).